We begin with the raw amino-acid sequence, 327 residues long: Taste receptor type 2 member 102 (327 aa).

Topologically, residues 1 to 7 (MEPVIYS) are extracellular. The helical transmembrane segment at 8-28 (FATLLIHVEFIFGNLSNGFIV) threads the bilayer. Topologically, residues 29 to 46 (LSNFWDWVIKRKLSTIDK) are cytoplasmic. The helical transmembrane segment at 47–67 (ILLTLAISRITLIWEIYTWFT) threads the bilayer. At 68-87 (SVYGPSSFAIGMKLQILYFT) the chain is on the extracellular side. The helical transmembrane segment at 88-108 (WILSSHFSLWFATALSIFYLL) threads the bilayer. Residues 109 to 124 (RIANCSWKIFLYLKWR) are Cytoplasmic-facing. The helical transmembrane segment at 125–145 (LKQVIVGMLLASLVFLPGILT) threads the bilayer. Topologically, residues 146–179 (QRTLEERPYRYGGNTSEDSMETDFARFTELILFN) are extracellular. 2 N-linked (GlcNAc...) asparagine glycosylation sites follow: N159 and N179. Residues 180 to 200 (LTIFSVIPFSLASISFLLLIF) traverse the membrane as a helical segment. The Cytoplasmic portion of the chain corresponds to 201–229 (SLWKHLRKMQLSSRGHGDPSTKAHTNALR). The chain crosses the membrane as a helical span at residues 230–250 (IMVSFLLLYSIYFLSLLLSWI). Residues 251-260 (AQKHHSKLVD) lie on the Extracellular side of the membrane. Residues 261–281 (IIGIITGLMYPSAHSFILILG) form a helical membrane-spanning segment. The Cytoplasmic portion of the chain corresponds to 282–327 (NSKLMQTSLWILSHLRCRLKGENILNPSGNQVTSCYIFCIANKSVS).

Belongs to the G-protein coupled receptor T2R family.

The protein localises to the membrane. In terms of biological role, putative taste receptor which may play a role in the perception of bitterness. The chain is Taste receptor type 2 member 102 from Rattus norvegicus (Rat).